Here is a 159-residue protein sequence, read N- to C-terminus: MEKLSEKDKGLIRDSWESLGKNKVPHGIVLFTRLFELDPALLTLFSYSTNCGDAPECLSSPEFLEHVTKVMLVIDAAVSHLDDLHTLEDFLLNLGRKHQAVGVNTQSFALVGESLLYMLQSSLGPAYTTSLRQAWLTMYSIVVSAMTRGWAKNGEHKSN.

In terms of domain architecture, Globin spans 3 to 151; sequence KLSEKDKGLI…VVSAMTRGWA (149 aa). The heme b site is built by His-66 and His-98.

Belongs to the globin family. In terms of assembly, monomer. Homodimers and homotetramers. Mainly monomeric but also detected as part of homodimers and homotetramers. Detected in brain, eye and gill, but not in muscle and blood (at protein level). Particularly high expression in the periventral zone of tectum opticum, with significant expression detected in white matter, preglomerular nucleus, posterior tubular nucleus, torus longitudinalis, hypothalamus, pituitary gland, posterior tuberculum, hypothalamus, synencephalon and formatio reticularis. Detected also in brain regions of the visual system, predominantly in parts of tectum opticum and torus semicircularis, area dorsalis telencephali and medulla oblongata. Strong expression observed in sensory epithelium of peripheral olfactory organ, and outer and inner nuclear layers and ganglion cell layer of retina.

It is found in the cytoplasm. The protein localises to the cytosol. It localises to the mitochondrion matrix. The catalysed reaction is Fe(III)-heme b-[protein] + nitric oxide + H2O = Fe(II)-heme b-[protein] + nitrite + 2 H(+). Functionally, monomeric globin with a bis-histidyl six-coordinate heme-iron atom through which it can bind dioxygen, carbon monoxide and nitric oxide. Could help transport oxygen and increase its availability to the metabolically active neuronal tissues, though its low quantity in tissues as well as its high affinity for dioxygen, which may limit its oxygen-releasing ability, argue against it. The ferrous/deoxygenated form exhibits a nitrite reductase activity and it could produce nitric oxide which in turn inhibits cellular respiration in response to hypoxia. In its ferrous/deoxygenated state, it may also exhibit GDI (Guanine nucleotide Dissociation Inhibitor) activity toward heterotrimeric G-alpha proteins, thereby regulating signal transduction to facilitate neuroprotective responses in the wake of hypoxia and associated oxidative stress. This Danio rerio (Zebrafish) protein is Neuroglobin (ngb).